Here is a 267-residue protein sequence, read N- to C-terminus: Proteasome subunit alpha (267 aa).

Residues E231–D267 form a disordered region. Residues L234 to D267 show a composition bias toward basic and acidic residues.

This sequence belongs to the peptidase T1A family. In terms of assembly, the 20S proteasome core is composed of 14 alpha and 14 beta subunits that assemble into four stacked heptameric rings, resulting in a barrel-shaped structure. The two inner rings, each composed of seven catalytic beta subunits, are sandwiched by two outer rings, each composed of seven alpha subunits. The catalytic chamber with the active sites is on the inside of the barrel. Has a gated structure, the ends of the cylinder being occluded by the N-termini of the alpha-subunits. Is capped by the proteasome-associated ATPase, ARC.

It localises to the cytoplasm. It participates in protein degradation; proteasomal Pup-dependent pathway. Its activity is regulated as follows. The formation of the proteasomal ATPase ARC-20S proteasome complex, likely via the docking of the C-termini of ARC into the intersubunit pockets in the alpha-rings, may trigger opening of the gate for substrate entry. Interconversion between the open-gate and close-gate conformations leads to a dynamic regulation of the 20S proteasome proteolysis activity. Its function is as follows. Component of the proteasome core, a large protease complex with broad specificity involved in protein degradation. The chain is Proteasome subunit alpha from Mycobacterium marinum (strain ATCC BAA-535 / M).